The following is a 329-amino-acid chain: DNA-directed RNA polymerase subunit alpha (329 aa).

Residues 1–235 (MQGSVTEFLK…EQLDAFVDLR (235 aa)) are alpha N-terminal domain (alpha-NTD). The segment at 249–329 (FDPILLRPVD…NWPPASIAED (81 aa)) is alpha C-terminal domain (alpha-CTD).

Belongs to the RNA polymerase alpha chain family. As to quaternary structure, homodimer. The RNAP catalytic core consists of 2 alpha, 1 beta, 1 beta' and 1 omega subunit. When a sigma factor is associated with the core the holoenzyme is formed, which can initiate transcription.

It carries out the reaction RNA(n) + a ribonucleoside 5'-triphosphate = RNA(n+1) + diphosphate. DNA-dependent RNA polymerase catalyzes the transcription of DNA into RNA using the four ribonucleoside triphosphates as substrates. This chain is DNA-directed RNA polymerase subunit alpha, found in Aliivibrio fischeri (strain ATCC 700601 / ES114) (Vibrio fischeri).